The chain runs to 261 residues: Global transcriptional regulator CodY (261 aa).

The interval 1–159 is GAF domain; the sequence is MPNLLEKTRK…ASTVVGIQLL (159 aa). Positions 207–226 form a DNA-binding region, H-T-H motif; sequence ASVIADRIGITRSVIVNALR.

Belongs to the CodY family.

The protein resides in the cytoplasm. In terms of biological role, DNA-binding global transcriptional regulator which is involved in the adaptive response to starvation and acts by directly or indirectly controlling the expression of numerous genes in response to nutrient availability. During rapid exponential growth, CodY is highly active and represses genes whose products allow adaptation to nutrient depletion. This Streptococcus agalactiae serotype III (strain NEM316) protein is Global transcriptional regulator CodY.